Reading from the N-terminus, the 264-residue chain is ATP synthase subunit a (264 aa).

Transmembrane regions (helical) follow at residues 41 to 61 (ITNIGFYLTMGAFFLLIINLL), 99 to 119 (IYFPFIYALFIFILINNLIGM), 129 to 149 (HFVLTFALSFTIVLGATILGF), 156 to 176 (FFSLLVPAGCPLGLLPLLVLI), 194 to 214 (ANILSGHMLLHILAGFTYNIM), 217 to 237 (GIIFFFLGLIPLAFIIAFSGL), and 238 to 258 (ELGIAFIQAQVFVVLTSGYIK).

This sequence belongs to the ATPase A chain family. F-type ATPases have 2 components, CF(1) - the catalytic core - and CF(0) - the membrane proton channel. CF(1) has five subunits: alpha(3), beta(3), gamma(1), delta(1), epsilon(1). CF(0) has three main subunits: a, b and c.

The protein resides in the mitochondrion inner membrane. Its function is as follows. Mitochondrial membrane ATP synthase (F(1)F(0) ATP synthase or Complex V) produces ATP from ADP in the presence of a proton gradient across the membrane which is generated by electron transport complexes of the respiratory chain. F-type ATPases consist of two structural domains, F(1) - containing the extramembraneous catalytic core and F(0) - containing the membrane proton channel, linked together by a central stalk and a peripheral stalk. During catalysis, ATP synthesis in the catalytic domain of F(1) is coupled via a rotary mechanism of the central stalk subunits to proton translocation. Key component of the proton channel; it may play a direct role in the translocation of protons across the membrane. This chain is ATP synthase subunit a (ATP6), found in Podospora anserina (strain S / ATCC MYA-4624 / DSM 980 / FGSC 10383) (Pleurage anserina).